Consider the following 412-residue polypeptide: 2,3-bisphosphoglycerate-independent phosphoglycerate mutase (412 aa).

It belongs to the BPG-independent phosphoglycerate mutase family. A-PGAM subfamily.

It carries out the reaction (2R)-2-phosphoglycerate = (2R)-3-phosphoglycerate. It functions in the pathway carbohydrate degradation; glycolysis; pyruvate from D-glyceraldehyde 3-phosphate: step 3/5. Its function is as follows. Catalyzes the interconversion of 2-phosphoglycerate and 3-phosphoglycerate. This chain is 2,3-bisphosphoglycerate-independent phosphoglycerate mutase, found in Methanobrevibacter smithii (strain ATCC 35061 / DSM 861 / OCM 144 / PS).